An 86-amino-acid polypeptide reads, in one-letter code: Large ribosomal subunit protein uL23c (86 aa).

The protein belongs to the universal ribosomal protein uL23 family. As to quaternary structure, part of the 50S ribosomal subunit.

The protein localises to the plastid. Its subcellular location is the chloroplast. Binds to 23S rRNA. The chain is Large ribosomal subunit protein uL23c (rpl23) from Chlorella vulgaris (Green alga).